The chain runs to 385 residues: Probable protein phosphatase 2C 38 (385 aa).

Positions 46–357 constitute a PPM-type phosphatase domain; the sequence is VAGEFSMSVI…DDITVIVVFL (312 aa). Residue serine 77 is modified to Phosphoserine. Residues aspartate 88, glycine 89, aspartate 289, and aspartate 348 each contribute to the Mn(2+) site.

Belongs to the PP2C family. As to quaternary structure, interacts with BIK1. Requires Mg(2+) as cofactor. Mn(2+) serves as cofactor. In terms of processing, phosphorylation at Ser-77 induces dissociation of PP2C38 from BIK1.

The protein resides in the cell membrane. The catalysed reaction is O-phospho-L-seryl-[protein] + H2O = L-seryl-[protein] + phosphate. The enzyme catalyses O-phospho-L-threonyl-[protein] + H2O = L-threonyl-[protein] + phosphate. May dephosphorylate and repress plasma membrane H(+)-ATPases (PM H(+)-ATPases, e.g. AHA1 and AHA2), thus influencing negatively plant growth and fitness. Involved in pathogen-associated molecular pattern (PAMP)-triggered immunity (PTI) signaling. Negatively regulates immune responses by controlling the phosphorylation and activation status of BIK1, a central rate-limiting kinase in PTI signaling. Impairs the phosphorylation of the NADPH oxidase RBOHD by BIK1. The chain is Probable protein phosphatase 2C 38 from Arabidopsis thaliana (Mouse-ear cress).